The sequence spans 93 residues: Small ribosomal subunit protein uS15 (93 aa).

The protein belongs to the universal ribosomal protein uS15 family. As to quaternary structure, part of the 30S ribosomal subunit. Forms a bridge to the 50S subunit in the 70S ribosome, contacting the 23S rRNA.

Functionally, one of the primary rRNA binding proteins, it binds directly to 16S rRNA where it helps nucleate assembly of the platform of the 30S subunit by binding and bridging several RNA helices of the 16S rRNA. Its function is as follows. Forms an intersubunit bridge (bridge B4) with the 23S rRNA of the 50S subunit in the ribosome. In Ehrlichia ruminantium (strain Gardel), this protein is Small ribosomal subunit protein uS15.